Consider the following 378-residue polypeptide: Quinolinate synthase (378 aa).

Residues His59 and Ser80 each coordinate iminosuccinate. Position 125 (Cys125) interacts with [4Fe-4S] cluster. Residues 151-153 (YAN) and Ser168 each bind iminosuccinate. A [4Fe-4S] cluster-binding site is contributed by Cys212. Residues 238–240 (HPE) and Thr255 contribute to the iminosuccinate site. Residue Cys309 participates in [4Fe-4S] cluster binding.

This sequence belongs to the quinolinate synthase family. Type 1 subfamily. [4Fe-4S] cluster is required as a cofactor.

It is found in the cytoplasm. It catalyses the reaction iminosuccinate + dihydroxyacetone phosphate = quinolinate + phosphate + 2 H2O + H(+). The protein operates within cofactor biosynthesis; NAD(+) biosynthesis; quinolinate from iminoaspartate: step 1/1. Catalyzes the condensation of iminoaspartate with dihydroxyacetone phosphate to form quinolinate. In Burkholderia pseudomallei (strain 668), this protein is Quinolinate synthase.